Here is a 159-residue protein sequence, read N- to C-terminus: Protein HydD (159 aa).

The protein belongs to the peptidase A31 family.

The protein is Protein HydD (hydD) of Wolinella succinogenes (strain ATCC 29543 / DSM 1740 / CCUG 13145 / JCM 31913 / LMG 7466 / NCTC 11488 / FDC 602W) (Vibrio succinogenes).